Reading from the N-terminus, the 283-residue chain is Elongation factor Ts (283 aa).

Positions 84 to 87 (TDFV) are involved in Mg(2+) ion dislocation from EF-Tu.

Belongs to the EF-Ts family.

It is found in the cytoplasm. Its function is as follows. Associates with the EF-Tu.GDP complex and induces the exchange of GDP to GTP. It remains bound to the aminoacyl-tRNA.EF-Tu.GTP complex up to the GTP hydrolysis stage on the ribosome. The polypeptide is Elongation factor Ts (Bifidobacterium longum subsp. infantis (strain ATCC 15697 / DSM 20088 / JCM 1222 / NCTC 11817 / S12)).